Consider the following 556-residue polypeptide: Genetic interactor of prohibitins 3, mitochondrial (556 aa).

The N-terminal 21 residues, 1–21, are a transit peptide targeting the mitochondrion; sequence MLNLCHALRGVRQFSCSVIVK. The CP-type G domain occupies 113 to 305; sequence ESTLNDILNY…LFDLPGYSTS (193 aa).

The protein belongs to the TRAFAC class YlqF/YawG GTPase family. GEP3 subfamily.

Its subcellular location is the mitochondrion. Interacts genetically with prohibitins and thus may be involved in the mitochondrial lipid metabolism. This is Genetic interactor of prohibitins 3, mitochondrial (GEP3) from Saccharomyces cerevisiae (strain ATCC 204508 / S288c) (Baker's yeast).